Here is a 182-residue protein sequence, read N- to C-terminus: MLKRRSNALITLSRTKLFPITTVAYYHRRLLNQQRRAVSTSPKKEIKSLEDLANLDSLDGVDTELIRDLINEHTTKLNIKKELDMLKKFSQEEESGHEIPVKRFIRPLWMFILMGSSVYLLLHFSWWKLEHEERESQLKKEVEILEHQLNELIVQDKTHNTSRGKGSNESTHMKPWYRRWFW.

The transit peptide at 1-45 (MLKRRSNALITLSRTKLFPITTVAYYHRRLLNQQRRAVSTSPKKE) directs the protein to the mitochondrion. At 46–107 (IKSLEDLANL…EIPVKRFIRP (62 aa)) the chain is on the mitochondrial matrix side. A helical membrane pass occupies residues 108–127 (LWMFILMGSSVYLLLHFSWW). Positions 128–158 (KLEHEERESQLKKEVEILEHQLNELIVQDKT) form a coiled coil. The Mitochondrial intermembrane segment spans residues 128–182 (KLEHEERESQLKKEVEILEHQLNELIVQDKTHNTSRGKGSNESTHMKPWYRRWFW).

The protein belongs to the INA17 family. As to quaternary structure, component of the inner membrane assembly (INA) complex, composed of INA17 and INA22. Interacts with a subset of F(1)F(0)-ATP synthase subunits of the F(1)-domain and the peripheral stalk.

It is found in the mitochondrion inner membrane. Functionally, component of the INA complex (INAC) that promotes the biogenesis of mitochondrial F(1)F(0)-ATP synthase. INAC facilitates the assembly of the peripheral stalk and promotes the assembly of the catalytic F(1)-domain with the membrane-embedded F(0)-domain. This chain is Inner membrane assembly complex subunit 17, found in Saccharomyces cerevisiae (strain RM11-1a) (Baker's yeast).